The following is a 323-amino-acid chain: Fructose-1,6-bisphosphatase class 1 (323 aa).

Residues Glu-84, Asp-103, Leu-105, and Asp-106 each coordinate Mg(2+). Residues 106-109, Asn-198, and Lys-264 each bind substrate; that span reads DGSS. Glu-270 serves as a coordination point for Mg(2+).

It belongs to the FBPase class 1 family. Homotetramer. Mg(2+) is required as a cofactor.

Its subcellular location is the cytoplasm. The catalysed reaction is beta-D-fructose 1,6-bisphosphate + H2O = beta-D-fructose 6-phosphate + phosphate. It participates in carbohydrate biosynthesis; gluconeogenesis. This chain is Fructose-1,6-bisphosphatase class 1, found in Hydrogenovibrio crunogenus (strain DSM 25203 / XCL-2) (Thiomicrospira crunogena).